Consider the following 352-residue polypeptide: Cyclin-O (352 aa).

The tract at residues 1-40 (MVTPCPASPGSPAAGAGRRDSHQNLRAPVKKSRRPCLRRK) is disordered. Over residues 28–40 (PVKKSRRPCLRRK) the composition is skewed to basic residues. S83 carries the post-translational modification Phosphoserine.

It belongs to the cyclin family. In terms of tissue distribution, present in respiratory cells (at protein level). Expressed in multiciliated tissue in brain and fallopian tube (at protein level). Highly expressed in oocytes.

It is found in the cytoplasm. It localises to the nucleus. The protein resides in the nucleolus. Functionally, specifically required for generation of multiciliated cells, possibly by promoting a cell cycle state compatible with centriole amplification and maturation. Acts downstream of MCIDAS to promote mother centriole amplification and maturation in preparation for apical docking. May be involved in apoptosis in lymphoid cells; however, this result requires additional evidences in vivo. May be involved in oocyte meiotic resumption in oocytes. The sequence is that of Cyclin-O from Mus musculus (Mouse).